A 264-amino-acid polypeptide reads, in one-letter code: MKMKKWTVLVVAALLAVLSACGNGNSSSKEDDNVLHVGATGQSYPFAYKENGKLTGFDVEVMEAVAKKIDMKLDWKLLEFSGLMGELQTGKLDTISNQVAVTDERKETYNFTKPYAYAGTQIVVKKDNTDIKSVDDLKGKTVAAVLGSNHAKNLESKDPDKKINIKTYETQEGTLKDVAYGRVDAYVNSRTVLIAQIKKTGLPLKLAGDPIVYEQVAFPFAKDDAHDKLRKKVNKALDELRKDGTLKKLSEKYFNEDITVEQKH.

An N-terminal signal peptide occupies residues 1 to 20; sequence MKMKKWTVLVVAALLAVLSA. A lipid anchor (N-palmitoyl cysteine) is attached at C21. A lipid anchor (S-diacylglycerol cysteine) is attached at C21.

This sequence belongs to the bacterial solute-binding protein 3 family. In terms of assembly, the complex is composed of two ATP-binding proteins (YxeO), two transmembrane proteins (YxeN) and a solute-binding protein (YxeM).

It localises to the cell membrane. The protein resides in the membrane raft. Probably part of the ABC transporter complex YxeMNO that could be involved in amino-acid import. May transport S-methylcysteine. The protein is Probable amino-acid-binding protein YxeM (yxeM) of Bacillus subtilis (strain 168).